The chain runs to 166 residues: 2-amino-4-hydroxy-6-hydroxymethyldihydropteridine pyrophosphokinase (166 aa).

Belongs to the HPPK family.

It carries out the reaction 6-hydroxymethyl-7,8-dihydropterin + ATP = (7,8-dihydropterin-6-yl)methyl diphosphate + AMP + H(+). Its pathway is cofactor biosynthesis; tetrahydrofolate biosynthesis; 2-amino-4-hydroxy-6-hydroxymethyl-7,8-dihydropteridine diphosphate from 7,8-dihydroneopterin triphosphate: step 4/4. In terms of biological role, catalyzes the transfer of pyrophosphate from adenosine triphosphate (ATP) to 6-hydroxymethyl-7,8-dihydropterin, an enzymatic step in folate biosynthesis pathway. This is 2-amino-4-hydroxy-6-hydroxymethyldihydropteridine pyrophosphokinase (folK) from Streptococcus pyogenes serotype M6 (strain ATCC BAA-946 / MGAS10394).